A 299-amino-acid polypeptide reads, in one-letter code: Probable lipid kinase YegS (299 aa).

The DAGKc domain maps to 2–133; it reads ANFPASLLIL…IDMARVNDKT (132 aa). Residues Thr-40, 66–72, and Thr-95 contribute to the ATP site; that span reads GDGTINE. Positions 215, 218, and 220 each coordinate Mg(2+). Catalysis depends on Glu-271, which acts as the Proton acceptor.

It belongs to the diacylglycerol/lipid kinase family. YegS lipid kinase subfamily. The cofactor is Mg(2+). Ca(2+) serves as cofactor.

It is found in the cytoplasm. Its function is as follows. Probably phosphorylates lipids; the in vivo substrate is unknown. The protein is Probable lipid kinase YegS of Salmonella heidelberg (strain SL476).